Here is a 23-residue protein sequence, read N- to C-terminus: FWGAAAKMLGKALPGLISMFQKN.

It belongs to the non-disulfide-bridged peptide (NDBP) superfamily. Medium-length antimicrobial peptide (group 3) family. Ponericin-W subfamily. As to expression, expressed by the venom gland.

The protein resides in the secreted. It localises to the target cell membrane. In terms of biological role, membrane-perturbating peptide with multiple activities. It is insecticidal, since it induces contractile paralysis in insects (L.cuprina) during several hours, and death after 24 hours. It shows antibacterial activity with higher activity against Gram-positive than Gram-negative bacteria. It is also antiparasitic, since it potently inhibits the larval development of the major pathogenic nematode of ruminants (H.contortus, IC(50)=5.1 uM), but fails to reduce the motility of adult males of the other nematode B.malayi. It also shows cytotoxic activity against HEK293 cells (EC(50)=12-14 uM) and induces hemolysis in human erythrocytes (EC(50)=28.6-48.2 uM). In addition, it causes an important increase in intracellular calcium concentration on neuronal and epithelial cell lines, which supports a non-specific membrane perturbation mechanism of action. In vivo, it induces pain by intraplantar injection into mice, suggesting a defensive function against vertebrate predators. The polypeptide is M-poneritoxin-Nc1a (Neoponera commutata (Large hunting ant)).